We begin with the raw amino-acid sequence, 180 residues long: Large ribosomal subunit protein uL5 (180 aa).

This sequence belongs to the universal ribosomal protein uL5 family. In terms of assembly, part of the 50S ribosomal subunit; part of the 5S rRNA/L5/L18/L25 subcomplex. Contacts the 5S rRNA and the P site tRNA. Forms a bridge to the 30S subunit in the 70S ribosome.

This is one of the proteins that bind and probably mediate the attachment of the 5S RNA into the large ribosomal subunit, where it forms part of the central protuberance. In the 70S ribosome it contacts protein S13 of the 30S subunit (bridge B1b), connecting the 2 subunits; this bridge is implicated in subunit movement. Contacts the P site tRNA; the 5S rRNA and some of its associated proteins might help stabilize positioning of ribosome-bound tRNAs. In Mycoplasma mycoides subsp. mycoides SC (strain CCUG 32753 / NCTC 10114 / PG1), this protein is Large ribosomal subunit protein uL5.